We begin with the raw amino-acid sequence, 95 residues long: Protein TusB (95 aa).

The protein belongs to the DsrH/TusB family. In terms of assembly, heterohexamer, formed by a dimer of trimers. The hexameric TusBCD complex contains 2 copies each of TusB, TusC and TusD. The TusBCD complex interacts with TusE.

It is found in the cytoplasm. In terms of biological role, part of a sulfur-relay system required for 2-thiolation of 5-methylaminomethyl-2-thiouridine (mnm(5)s(2)U) at tRNA wobble positions. The sequence is that of Protein TusB from Shigella sonnei (strain Ss046).